The primary structure comprises 353 residues: Cyanuric acid amidohydrolase (353 aa).

Positions 1 to 90 (MSSTALYTVP…NIFVRDERQY (90 aa)) are RU A. Residues arginine 49 and 69–70 (SG) contribute to the substrate site. Positions 96–231 (GLVTAVGRTR…CHILVVAESD (136 aa)) are RU B. Lysine 145 is an active-site residue. Substrate contacts are provided by residues arginine 177 and 214–215 (SS). Serine 214 functions as the Nucleophile in the catalytic mechanism. The interval 237–353 (LRAAHTAMRD…TANATGEASR (117 aa)) is RU C. Glutamate 275 is a Mg(2+) binding site. Residues arginine 302 and 321-322 (SG) each bind substrate. The Mg(2+) site is built by alanine 324, glutamine 327, glycine 328, proline 329, and glycine 332.

This sequence belongs to the cyclic amide hydrolase (CyAH) family. In terms of assembly, homotetramer.

It carries out the reaction cyanurate + H2O = 1-carboxybiuret + H(+). It participates in xenobiotic degradation; atrazine degradation; biuret from cyanurate: step 1/1. With respect to regulation, inhibited by barbituric acid. Responsible for the hydrolysis of cyanuric acid, an intermediate formed during catabolism of s-triazine based compounds in herbicides such as atrazine and polymers such as melamine. Catalyzes the hydrolytic opening of the s-triazine ring of cyanuric acid (2,4,6-trihydroxy-s-triazine) to yield carbon dioxide and carboxybiuret, which spontaneously decarboxylates to biuret. Required for growth on melamine or cyanuric acid as sole nitrogen source. The sequence is that of Cyanuric acid amidohydrolase from Rhodococcus sp.